A 440-amino-acid polypeptide reads, in one-letter code: Chromosome partition protein MukF (440 aa).

Positions 208–236 (LDETSGNLRELQDTLNAAGDKLQSQLLRI) are leucine-zipper.

It belongs to the MukF family. As to quaternary structure, interacts, and probably forms a ternary complex, with MukE and MukB via its C-terminal region. The complex formation is stimulated by calcium or magnesium. It is required for an interaction between MukE and MukB.

It localises to the cytoplasm. It is found in the nucleoid. Involved in chromosome condensation, segregation and cell cycle progression. May participate in facilitating chromosome segregation by condensation DNA from both sides of a centrally located replisome during cell division. Not required for mini-F plasmid partitioning. Probably acts via its interaction with MukB and MukE. Overexpression results in anucleate cells. It has a calcium binding activity. This Histophilus somni (strain 129Pt) (Haemophilus somnus) protein is Chromosome partition protein MukF.